The following is a 446-amino-acid chain: Exodeoxyribonuclease 7 large subunit (446 aa).

It belongs to the XseA family. Heterooligomer composed of large and small subunits.

Its subcellular location is the cytoplasm. It carries out the reaction Exonucleolytic cleavage in either 5'- to 3'- or 3'- to 5'-direction to yield nucleoside 5'-phosphates.. Bidirectionally degrades single-stranded DNA into large acid-insoluble oligonucleotides, which are then degraded further into small acid-soluble oligonucleotides. This is Exodeoxyribonuclease 7 large subunit from Streptococcus pneumoniae serotype 4 (strain ATCC BAA-334 / TIGR4).